The sequence spans 239 residues: Enolase-phosphatase E1 (239 aa).

Mg(2+)-binding residues include D13 and E15. Substrate-binding positions include 133–134 (SS) and K170. D196 is a Mg(2+) binding site.

This sequence belongs to the HAD-like hydrolase superfamily. MasA/MtnC family. In terms of assembly, monomer. Mg(2+) is required as a cofactor.

It localises to the cytoplasm. Its subcellular location is the nucleus. It catalyses the reaction 5-methylsulfanyl-2,3-dioxopentyl phosphate + H2O = 1,2-dihydroxy-5-(methylsulfanyl)pent-1-en-3-one + phosphate. It participates in amino-acid biosynthesis; L-methionine biosynthesis via salvage pathway; L-methionine from S-methyl-5-thio-alpha-D-ribose 1-phosphate: step 3/6. The protein operates within amino-acid biosynthesis; L-methionine biosynthesis via salvage pathway; L-methionine from S-methyl-5-thio-alpha-D-ribose 1-phosphate: step 4/6. Its function is as follows. Bifunctional enzyme that catalyzes the enolization of 2,3-diketo-5-methylthiopentyl-1-phosphate (DK-MTP-1-P) into the intermediate 2-hydroxy-3-keto-5-methylthiopentenyl-1-phosphate (HK-MTPenyl-1-P), which is then dephosphorylated to form the acireductone 1,2-dihydroxy-3-keto-5-methylthiopentene (DHK-MTPene). The sequence is that of Enolase-phosphatase E1 from Chaetomium globosum (strain ATCC 6205 / CBS 148.51 / DSM 1962 / NBRC 6347 / NRRL 1970) (Soil fungus).